The primary structure comprises 365 residues: Paraneoplastic antigen Ma2 homolog (365 aa).

Ala-2 carries the post-translational modification N-acetylalanine. Residues 336 to 365 (EEEDAYFEQESREEPGEREGSGCWNNSRNN) are disordered. Over residues 344-355 (QESREEPGEREG) the composition is skewed to basic and acidic residues.

It belongs to the PNMA family. Expressed in the cerebrum, cerebellum and testis.

It is found in the nucleus. Its subcellular location is the nucleolus. In Mus musculus (Mouse), this protein is Paraneoplastic antigen Ma2 homolog (Pnma2).